We begin with the raw amino-acid sequence, 537 residues long: DEAD-box ATP-dependent RNA helicase 5 (537 aa).

The disordered stretch occupies residues 1 to 97 (MAGQKQELPV…EDLGEGESEQ (97 aa)). Positions 22–80 (TNKKKKKSKKNKHTEENHEVEEVPQEVTNGVEEELSNKEKKKKRKREEKESEKNKKKDV) form a coiled coil. Basic residues predominate over residues 23 to 33 (NKKKKKSKKNK). Over residues 68–87 (EEKESEKNKKKDVPEKKLEA) the composition is skewed to basic and acidic residues. The short motif at 116–142 (KTFAESNLPENVLDCCKTFEKPSPIQS) is the Q motif element. One can recognise a Helicase ATP-binding domain in the interval 145–324 (WPFLLDGRDL…QEFMDPNPIK (180 aa)). Residue 158–165 (AKTGSGKT) coordinates ATP. A DEAD box motif is present at residues 272–275 (DEAD). The 152-residue stretch at 349 to 500 (ARDQRLIALL…VVPADLLKFG (152 aa)) folds into the Helicase C-terminal domain. Position 533 is a phosphoserine (S533).

This sequence belongs to the DEAD box helicase family. DDX5/DBP2 subfamily.

The protein resides in the nucleus. It localises to the nucleolus. It catalyses the reaction ATP + H2O = ADP + phosphate + H(+). Its function is as follows. ATP-dependent RNA helicase required for 60S ribosomal subunit synthesis. Involved in efficient pre-rRNA processing, predominantly at site A3, which is necessary for the normal formation of 25S and 5.8S rRNAs. The protein is DEAD-box ATP-dependent RNA helicase 5 (RH5) of Arabidopsis thaliana (Mouse-ear cress).